A 730-amino-acid polypeptide reads, in one-letter code: Semaphorin-1A (730 aa).

The signal sequence occupies residues 1-20 (MRAALVAVAALLWVALHAAA). The Extracellular portion of the chain corresponds to 21–630 (WVNDVSPKMY…LPIYTAETLT (610 aa)). In terms of domain architecture, Sema spans 28–490 (KMYVQFGEER…SDDEILAIKL (463 aa)). Asn44 and Asn71 each carry an N-linked (GlcNAc...) asparagine glycan. 2 cysteine pairs are disulfide-bonded: Cys97–Cys107 and Cys125–Cys134. 2 N-linked (GlcNAc...) asparagine glycosylation sites follow: Asn163 and Asn267. 2 cysteine pairs are disulfide-bonded: Cys244–Cys358 and Cys268–Cys317. N-linked (GlcNAc...) asparagine glycosylation occurs at Asn360. 2 cysteine pairs are disulfide-bonded: Cys493-Cys512 and Cys504-Cys521. The N-linked (GlcNAc...) asparagine glycan is linked to Asn539. A helical transmembrane segment spans residues 631 to 651 (IAIVTSCLGALVVGFISGFLF). The Cytoplasmic portion of the chain corresponds to 652-730 (SRRCRGEDYT…PIQKVKKTYI (79 aa)). Low complexity predominate over residues 708–720 (ANGKNANSSAENK). The segment at 708–730 (ANGKNANSSAENKPIQKVKKTYI) is disordered.

Belongs to the semaphorin family. In terms of tissue distribution, dynamically expressed on a subset of axon pathways in the developing CNS and on circumferential bands of epithelial cells in developing limb buds.

The protein localises to the membrane. Its function is as follows. Plays a role in growth cones guidance. In Schistocerca americana (American grasshopper), this protein is Semaphorin-1A (SEMA-1A).